The sequence spans 1298 residues: MLILRGAPALSAFRHSKLLEQLSQKVPAVSGLYAEFAHFAEVTGVLTGDEQQVLARLLKYGPSVPVQEPTGRLFLVLPRFGTISPWSSKASDIARNCGLSKIQRLERGIAFYVAGQFSETEAQQIADVLHDRMTQIVLANLEQAAGLFSHAEPKPLTAIDILGGGRAALEKANVELGLALAEDEIDYLVNAFNGLKRNPHDIELMMFAQANSEHCRHKIFNASWDIDGESQEKSLFGMIKNTYQMHSEGVLSAYKDNASVIVGNVAGRFFPDPETRQYGAVQEPVHILMKVETHNHPTAIAPFPGASTGSGGEIRDEGATGRGAKPKAGLTGFTVSNLQIPGFEQPWEVPYGKPERIVNALDIMIEGPLGGAAFNNEFGRPALTGYFRTFEQSITTPHGDEVRGYHKPIMLAGGMGNIREEHVKKGEIVVGSKLVVLGGPAMLIGLGGGAASSMATGTSSADLDFASVQRENPEMERRCQEVIDRCWQLGDKNPISFIHDVGAGGLSNAFPELVNDGDRGGRFELRNIPNDEPGMAPHEIWSNESQERYVLAVGPADFERFKAICERERCPFAVVGEATAEPQLTVTDSHFGNNPVDMPLEVLLGKAPRMHRSVVREAELGDDFDPSNLDIGESIERVLHHPAVASKSFLITIGDRTITGLVARDQMVGPWQVPVADVAVTATSFDVYTGEAMAMGERTPLALLDAPASGRMAIGETITNIAASRINKLSDIKLSANWMSAAGHPGEDARLYDTVKAVGMELCPELGITIPVGKDSMSMATRWNDNGEDKTVTSPMSLIVTGFAPVADIRQTLTPELRMDKGTTDLILIDLGRGQNRMGASILAQVHGKLGKQAPDVDDAEDLKAFFAVIQGLNADGHLLAYHDRSDGGLLTSVMEMAFAGHCGLSLNLDSVAESSAEIAAILFNEELGAVIQVRQDATPDILAQFSAAGLGDCVSVIGQPINNGQINITFNGDTVFEGQRRLLQRQWAETSYQIQRLRDNADCAEQEFDALLEEDNPGLSVKLSYDVNQDIAAPYIKKGIRPQVAVLREQGVNGQVEMAAAFDRAGFNAIDVHMSDILAGRVDLNEFKGLVACGGFSYGDVLGAGEGWAKSALFNSRARDAFQGFFERNDSFTLGVCNGCQMMSNLHELIPGSEFWPHFVRNRSEQFEARVAMVQVQESNSIFLQGMAGSRMPIAIAHGEGHAEFESEEALLEADLSGCVAMRFVDNHGKVTEAYPANPNGSPRGITGLTSRDGRVTIMMPHPERVFRAVQNSWRSEDWNEDAPWMRMFRNARVWVN.

The interval 301–328 (APFPGASTGSGGEIRDEGATGRGAKPKA) is disordered. ATP is bound by residues 305–316 (GASTGSGGEIRD), 384–386 (TGY), and Ala-676. 4 residues coordinate Mg(2+): Asp-677, Glu-716, Asn-720, and Asp-884. Position 886 (Ser-886) interacts with ATP. Positions 1045–1298 (VAVLREQGVN…MFRNARVWVN (254 aa)) constitute a Glutamine amidotransferase type-1 domain. Catalysis depends on Cys-1138, which acts as the Nucleophile. Catalysis depends on residues His-1263 and Glu-1265.

In the N-terminal section; belongs to the FGAMS family. In terms of assembly, monomer.

Its subcellular location is the cytoplasm. It catalyses the reaction N(2)-formyl-N(1)-(5-phospho-beta-D-ribosyl)glycinamide + L-glutamine + ATP + H2O = 2-formamido-N(1)-(5-O-phospho-beta-D-ribosyl)acetamidine + L-glutamate + ADP + phosphate + H(+). It participates in purine metabolism; IMP biosynthesis via de novo pathway; 5-amino-1-(5-phospho-D-ribosyl)imidazole from N(2)-formyl-N(1)-(5-phospho-D-ribosyl)glycinamide: step 1/2. Phosphoribosylformylglycinamidine synthase involved in the purines biosynthetic pathway. Catalyzes the ATP-dependent conversion of formylglycinamide ribonucleotide (FGAR) and glutamine to yield formylglycinamidine ribonucleotide (FGAM) and glutamate. The sequence is that of Phosphoribosylformylglycinamidine synthase from Pseudomonas fluorescens (strain Pf0-1).